A 119-amino-acid chain; its full sequence is uncharacterized protein (119 aa).

This is an uncharacterized protein from Shigella flexneri.